The chain runs to 274 residues: Dermonecrotic toxin SaSicTox-betaIIB1 (274 aa).

Residue histidine 5 is part of the active site. Mg(2+) contacts are provided by glutamate 25 and aspartate 27. The Nucleophile role is filled by histidine 41. 2 disulfides stabilise this stretch: cysteine 45/cysteine 51 and cysteine 47/cysteine 190. Aspartate 85 serves as a coordination point for Mg(2+).

The protein belongs to the arthropod phospholipase D family. Class II subfamily. Requires Mg(2+) as cofactor. In terms of tissue distribution, expressed by the venom gland.

The protein localises to the secreted. It catalyses the reaction an N-(acyl)-sphingosylphosphocholine = an N-(acyl)-sphingosyl-1,3-cyclic phosphate + choline. The enzyme catalyses an N-(acyl)-sphingosylphosphoethanolamine = an N-(acyl)-sphingosyl-1,3-cyclic phosphate + ethanolamine. The catalysed reaction is a 1-acyl-sn-glycero-3-phosphocholine = a 1-acyl-sn-glycero-2,3-cyclic phosphate + choline. It carries out the reaction a 1-acyl-sn-glycero-3-phosphoethanolamine = a 1-acyl-sn-glycero-2,3-cyclic phosphate + ethanolamine. In terms of biological role, dermonecrotic toxins cleave the phosphodiester linkage between the phosphate and headgroup of certain phospholipids (sphingolipid and lysolipid substrates), forming an alcohol (often choline) and a cyclic phosphate. This toxin acts on sphingomyelin (SM). It may also act on ceramide phosphoethanolamine (CPE), lysophosphatidylcholine (LPC) and lysophosphatidylethanolamine (LPE), but not on lysophosphatidylserine (LPS), and lysophosphatidylglycerol (LPG). It acts by transphosphatidylation, releasing exclusively cyclic phosphate products as second products. Induces dermonecrosis, hemolysis, increased vascular permeability, edema, inflammatory response, and platelet aggregation. This is Dermonecrotic toxin SaSicTox-betaIIB1 from Sicarius albospinosus (Six-eyed crab spider).